A 1342-amino-acid chain; its full sequence is DNA-directed RNA polymerase subunit beta (1342 aa).

This sequence belongs to the RNA polymerase beta chain family. The RNAP catalytic core consists of 2 alpha, 1 beta, 1 beta' and 1 omega subunit. When a sigma factor is associated with the core the holoenzyme is formed, which can initiate transcription.

The enzyme catalyses RNA(n) + a ribonucleoside 5'-triphosphate = RNA(n+1) + diphosphate. In terms of biological role, DNA-dependent RNA polymerase catalyzes the transcription of DNA into RNA using the four ribonucleoside triphosphates as substrates. The sequence is that of DNA-directed RNA polymerase subunit beta from Actinobacillus pleuropneumoniae serotype 5b (strain L20).